The following is a 516-amino-acid chain: Exodeoxyribonuclease 7 large subunit (516 aa).

Belongs to the XseA family. As to quaternary structure, heterooligomer composed of large and small subunits.

It is found in the cytoplasm. The catalysed reaction is Exonucleolytic cleavage in either 5'- to 3'- or 3'- to 5'-direction to yield nucleoside 5'-phosphates.. Bidirectionally degrades single-stranded DNA into large acid-insoluble oligonucleotides, which are then degraded further into small acid-soluble oligonucleotides. This Chlamydia trachomatis serovar L2 (strain ATCC VR-902B / DSM 19102 / 434/Bu) protein is Exodeoxyribonuclease 7 large subunit.